A 119-amino-acid polypeptide reads, in one-letter code: Protein yippee-like 2 (119 aa).

A Yippee domain is found at 19–116 (RTYSCIHCRA…IELAHMIKDN (98 aa)). 4 residues coordinate Zn(2+): Cys23, Cys26, Cys79, and Cys82.

It belongs to the yippee family. In terms of assembly, may interact with FAM168B.

It is found in the nucleus. Its subcellular location is the nucleolus. This Chlorocebus aethiops (Green monkey) protein is Protein yippee-like 2 (YPEL2).